A 424-amino-acid polypeptide reads, in one-letter code: Histidine--tRNA ligase (424 aa).

The protein belongs to the class-II aminoacyl-tRNA synthetase family. As to quaternary structure, homodimer.

It is found in the cytoplasm. The catalysed reaction is tRNA(His) + L-histidine + ATP = L-histidyl-tRNA(His) + AMP + diphosphate + H(+). In Salmonella typhi, this protein is Histidine--tRNA ligase.